Here is a 184-residue protein sequence, read N- to C-terminus: Ribulose bisphosphate carboxylase small subunit, chloroplastic 5 (184 aa).

Residues 1–43 (MAAAMMNKTIVVSKDGCARSSSIPKVATNKMGFASAVAMKKSR) constitute a chloroplast transit peptide.

Belongs to the RuBisCO small chain family. As to quaternary structure, heterohexadecamer of 8 large and 8 small subunits.

The protein localises to the plastid. Its subcellular location is the chloroplast. In terms of biological role, ruBisCO catalyzes two reactions: the carboxylation of D-ribulose 1,5-bisphosphate, the primary event in carbon dioxide fixation, as well as the oxidative fragmentation of the pentose substrate. Both reactions occur simultaneously and in competition at the same active site. Although the small subunit is not catalytic it is essential for maximal activity. This is Ribulose bisphosphate carboxylase small subunit, chloroplastic 5 from Acetabularia peniculus (Green alga).